We begin with the raw amino-acid sequence, 341 residues long: Holliday junction branch migration complex subunit RuvB (341 aa).

Residues 1–182 form a large ATPase domain (RuvB-L) region; that stretch reads MTSSDPTLRP…FGIPTRLQFY (182 aa). ATP is bound by residues L21, R22, G63, K66, T67, T68, 129-131, R172, Y182, and R219; that span reads EDF. Residue T67 coordinates Mg(2+). The small ATPAse domain (RuvB-S) stretch occupies residues 183–253; it reads TEDELDLIVA…IADRALTRLG (71 aa). The segment at 256 to 341 is head domain (RuvB-H); the sequence is HLGLDLGDRR…KGPGQSDLFG (86 aa). DNA contacts are provided by R292, R311, and R316.

It belongs to the RuvB family. As to quaternary structure, homohexamer. Forms an RuvA(8)-RuvB(12)-Holliday junction (HJ) complex. HJ DNA is sandwiched between 2 RuvA tetramers; dsDNA enters through RuvA and exits via RuvB. An RuvB hexamer assembles on each DNA strand where it exits the tetramer. Each RuvB hexamer is contacted by two RuvA subunits (via domain III) on 2 adjacent RuvB subunits; this complex drives branch migration. In the full resolvosome a probable DNA-RuvA(4)-RuvB(12)-RuvC(2) complex forms which resolves the HJ.

It is found in the cytoplasm. It carries out the reaction ATP + H2O = ADP + phosphate + H(+). In terms of biological role, the RuvA-RuvB-RuvC complex processes Holliday junction (HJ) DNA during genetic recombination and DNA repair, while the RuvA-RuvB complex plays an important role in the rescue of blocked DNA replication forks via replication fork reversal (RFR). RuvA specifically binds to HJ cruciform DNA, conferring on it an open structure. The RuvB hexamer acts as an ATP-dependent pump, pulling dsDNA into and through the RuvAB complex. RuvB forms 2 homohexamers on either side of HJ DNA bound by 1 or 2 RuvA tetramers; 4 subunits per hexamer contact DNA at a time. Coordinated motions by a converter formed by DNA-disengaged RuvB subunits stimulates ATP hydrolysis and nucleotide exchange. Immobilization of the converter enables RuvB to convert the ATP-contained energy into a lever motion, pulling 2 nucleotides of DNA out of the RuvA tetramer per ATP hydrolyzed, thus driving DNA branch migration. The RuvB motors rotate together with the DNA substrate, which together with the progressing nucleotide cycle form the mechanistic basis for DNA recombination by continuous HJ branch migration. Branch migration allows RuvC to scan DNA until it finds its consensus sequence, where it cleaves and resolves cruciform DNA. This chain is Holliday junction branch migration complex subunit RuvB, found in Cereibacter sphaeroides (strain ATCC 17029 / ATH 2.4.9) (Rhodobacter sphaeroides).